Here is a 233-residue protein sequence, read N- to C-terminus: UPF0758 protein RoseRS_0767 (233 aa).

Residues 107–229 (LIRSPTDAAQ…FVSMRERGLG (123 aa)) enclose the MPN domain. Zn(2+) is bound by residues His178, His180, and Asp191. A JAMM motif motif is present at residues 178 to 191 (HNHPSGDPTPSPED).

It belongs to the UPF0758 family.

This is UPF0758 protein RoseRS_0767 from Roseiflexus sp. (strain RS-1).